The sequence spans 893 residues: DNA gyrase subunit A (893 aa).

The Topo IIA-type catalytic domain maps to Leu-35–Leu-501. Residue Tyr-123 is the O-(5'-phospho-DNA)-tyrosine intermediate of the active site. Residues Gln-528–Gly-534 carry the GyrA-box motif. The tract at residues Val-810–Glu-893 is disordered. Composition is skewed to acidic residues over residues Glu-812–Asp-821 and Asp-852–Glu-862. Basic and acidic residues predominate over residues Asn-863 to Glu-879. The segment covering Asp-880 to Glu-893 has biased composition (acidic residues).

The protein belongs to the type II topoisomerase GyrA/ParC subunit family. In terms of assembly, heterotetramer, composed of two GyrA and two GyrB chains. In the heterotetramer, GyrA contains the active site tyrosine that forms a transient covalent intermediate with DNA, while GyrB binds cofactors and catalyzes ATP hydrolysis.

It is found in the cytoplasm. The catalysed reaction is ATP-dependent breakage, passage and rejoining of double-stranded DNA.. In terms of biological role, a type II topoisomerase that negatively supercoils closed circular double-stranded (ds) DNA in an ATP-dependent manner to modulate DNA topology and maintain chromosomes in an underwound state. Negative supercoiling favors strand separation, and DNA replication, transcription, recombination and repair, all of which involve strand separation. Also able to catalyze the interconversion of other topological isomers of dsDNA rings, including catenanes and knotted rings. Type II topoisomerases break and join 2 DNA strands simultaneously in an ATP-dependent manner. The protein is DNA gyrase subunit A of Staphylococcus epidermidis (strain ATCC 12228 / FDA PCI 1200).